We begin with the raw amino-acid sequence, 255 residues long: Imidazole glycerol phosphate synthase subunit HisF (255 aa).

Residues D12 and D131 contribute to the active site.

Belongs to the HisA/HisF family. As to quaternary structure, heterodimer of HisH and HisF.

The protein localises to the cytoplasm. The catalysed reaction is 5-[(5-phospho-1-deoxy-D-ribulos-1-ylimino)methylamino]-1-(5-phospho-beta-D-ribosyl)imidazole-4-carboxamide + L-glutamine = D-erythro-1-(imidazol-4-yl)glycerol 3-phosphate + 5-amino-1-(5-phospho-beta-D-ribosyl)imidazole-4-carboxamide + L-glutamate + H(+). The protein operates within amino-acid biosynthesis; L-histidine biosynthesis; L-histidine from 5-phospho-alpha-D-ribose 1-diphosphate: step 5/9. Its function is as follows. IGPS catalyzes the conversion of PRFAR and glutamine to IGP, AICAR and glutamate. The HisF subunit catalyzes the cyclization activity that produces IGP and AICAR from PRFAR using the ammonia provided by the HisH subunit. The polypeptide is Imidazole glycerol phosphate synthase subunit HisF (Ruthia magnifica subsp. Calyptogena magnifica).